We begin with the raw amino-acid sequence, 186 residues long: Peptide deformylase (186 aa).

Fe cation-binding residues include C99 and H141. Residue E142 is part of the active site. H145 serves as a coordination point for Fe cation.

It belongs to the polypeptide deformylase family. Fe(2+) serves as cofactor.

It carries out the reaction N-terminal N-formyl-L-methionyl-[peptide] + H2O = N-terminal L-methionyl-[peptide] + formate. In terms of biological role, removes the formyl group from the N-terminal Met of newly synthesized proteins. Requires at least a dipeptide for an efficient rate of reaction. N-terminal L-methionine is a prerequisite for activity but the enzyme has broad specificity at other positions. This chain is Peptide deformylase, found in Chlamydia felis (strain Fe/C-56) (Chlamydophila felis).